We begin with the raw amino-acid sequence, 687 residues long: MCASLNEVKKNDTYGVSQKGYNDNFSESEGVLHGSKSMPTSMKNMLQSPTMVNMCDILQNKEAANDEKPVIPTTDTATAGTGTEDISSTQSEETDQNSHLIASEILEGTFKDVSYKEYANFLGNDNNNQVLTEFVKLLSPLPSSLLETLFNLSKSIYFIAEAQNIDRILECLSIEWIACHPNTHWKSGYKSCHIVLFSLLILNSDLHNNFQVDHKKIKFSMVAFINNTLRALREENEYEELKIYSREHLIIEELSEYYKTLNETPLPLCTESRTSINISDNQSSLKRFSTLGSREFSTSNLRSVNSNSTTLYSRDGQVSVREMSAKSNKNFHNNHPMDALYLKESFDDGLITENGSSWFMDDLILISKKSLPRKYSKRDKDQVAAPKMTSKRNKSFFGWLKPSKTTTLIEHTSRRTSLSYLNKDSEWERVKIQVKEGRIFIFKIKPDVKDIIQSSETDSATIDYFKDISSSYFAYSLLEAEAHVVQDNIIIGSGAMKSNVCNKNTKRKSGNFTVSFPENINGPKLVLEFQTRSVEEAHKFMDCINFWAGRISPVPLTQFEAVSNAEYGWSDKILTEHASLNLKNIVVSEWKPLLGLELLYEDAKDVEMVELKERLKELMNFTRQLGIWIDKHNEIKDKLVEIWSFDDNYFEAVMNNWNSRYLYMNNQYKKRLSYLKALQKAMGSVQF.

Positions 14–27 are enriched in polar residues; that stretch reads YGVSQKGYNDNFSE. 2 disordered regions span residues 14–35 and 63–97; these read YGVS…LHGS and AAND…TDQN. Residues 57–264 enclose the SEC7 domain; sequence ILQNKEAAND…SEYYKTLNET (208 aa). Over residues 73-83 the composition is skewed to low complexity; that stretch reads TTDTATAGTGT. Residue T290 is modified to Phosphothreonine. Phosphoserine occurs at positions 293 and 299. Residues 412 to 551 enclose the PH domain; the sequence is TSRRTSLSYL…DCINFWAGRI (140 aa).

The protein belongs to the YEL1 family.

The protein resides in the cytoplasm. Its subcellular location is the cell membrane. It localises to the bud neck. It is found in the bud tip. Functionally, guanine nucleotide exchange factor for ARF3 required for localization of ARF3 to the bud neck and tip and involved in actin patch polarization. In Saccharomyces cerevisiae (strain YJM789) (Baker's yeast), this protein is Guanine-nucleotide exchange factor YEL1 (YEL1).